The primary structure comprises 286 residues: MTAKLIDGLALSKTLRADVAARAAALTARGHQPGLAVVLVGDNPASEVYVRNKVKACHDNGLGSSFDRYPADLPEAELLARIDELNRDPRIHGILVQLPLPPHIDSHKVIEAIAPEKDVDGFHVANAGALMTGRPLFRPCTPYGVMKMLAAYEIPLQGANAVVIGRSNIVGKPMALLLLEAGATVTICHSKTRDLAAHTRNADVVVAATGLRNILTAEMVKPGAAVIDVGMNRDDAGKLCGDVDFAGVKEVAGYITPVPGGVGPMTITMLLVNTIEAAEREAAANA.

NADP(+)-binding positions include 165-167 (GRS) and Ser-190.

This sequence belongs to the tetrahydrofolate dehydrogenase/cyclohydrolase family. In terms of assembly, homodimer.

The enzyme catalyses (6R)-5,10-methylene-5,6,7,8-tetrahydrofolate + NADP(+) = (6R)-5,10-methenyltetrahydrofolate + NADPH. It catalyses the reaction (6R)-5,10-methenyltetrahydrofolate + H2O = (6R)-10-formyltetrahydrofolate + H(+). The protein operates within one-carbon metabolism; tetrahydrofolate interconversion. Its function is as follows. Catalyzes the oxidation of 5,10-methylenetetrahydrofolate to 5,10-methenyltetrahydrofolate and then the hydrolysis of 5,10-methenyltetrahydrofolate to 10-formyltetrahydrofolate. This Paraburkholderia phytofirmans (strain DSM 17436 / LMG 22146 / PsJN) (Burkholderia phytofirmans) protein is Bifunctional protein FolD.